A 555-amino-acid chain; its full sequence is Serine/threonine-protein kinase AGC1-7 (555 aa).

The segment at 1-126 (MLTKPGKKLD…PSKPHTGGDI (126 aa)) is disordered. Basic and acidic residues-rich tracts occupy residues 7 to 16 (KKLDSSESTH) and 35 to 54 (PRKE…DNLI). Low complexity predominate over residues 84-118 (SQSNLNTKPNNNNSNNNSNMSSRSNSIESTSSNPS). Residues 146 to 480 (FRLLKRLGYG…ATEIKQHPFF (335 aa)) form the Protein kinase domain. ATP is bound by residues 152–160 (LGYGDIGSV) and lysine 175. Catalysis depends on aspartate 271, which acts as the Proton acceptor. The 75-residue stretch at 481-555 (EGVNWALIRS…DPDYIDFEYF (75 aa)) folds into the AGC-kinase C-terminal domain. Positions 514–547 (AAVDGGGKKNNNGAGGGCSTGGGDNKPNGDCNDP) are disordered. Residues 526–537 (GAGGGCSTGGGD) show a composition bias toward gly residues.

It belongs to the protein kinase superfamily. AGC Ser/Thr protein kinase family. As to quaternary structure, interacts with PDPK1/PDK1. Autophosphorylated and phosphorylated by PDPK1/PDK1. In terms of tissue distribution, specifically expressed in pollen grains.

It is found in the cytoplasm. The catalysed reaction is L-seryl-[protein] + ATP = O-phospho-L-seryl-[protein] + ADP + H(+). The enzyme catalyses L-threonyl-[protein] + ATP = O-phospho-L-threonyl-[protein] + ADP + H(+). Its activity is regulated as follows. Activated by PDPK1/PDK1. Functions redudantly with AGC1-5 as signaling component in the pollen tube. Required for polarized growth of pollen tubes. This Arabidopsis thaliana (Mouse-ear cress) protein is Serine/threonine-protein kinase AGC1-7.